A 1048-amino-acid polypeptide reads, in one-letter code: Cysteine-rich motor neuron 1 protein (1048 aa).

Positions 1-46 (MYLAAVSAGRRRPGGDGGGGGGGWHLAAAGWLLLLALLLGQPGTRA) are cleaved as a signal peptide. The IGFBP N-terminal domain occupies 47–124 (LVCLPCDESK…EYEVGVCEDE (78 aa)). Over 47 to 952 (LVCLPCDESK…HPSEDASVSS (906 aa)) the chain is Extracellular. 4 disulfides stabilise this stretch: Cys49-Cys72, Cys52-Cys74, Cys57-Cys75, and Cys63-Cys78. Asn83 carries an N-linked (GlcNAc...) asparagine glycan. 2 disulfides stabilise this stretch: Cys86–Cys102 and Cys96–Cys121. Positions 326 to 328 (RGD) match the Cell attachment site motif. VWFC domains lie at 346–403 (PTCI…PVCE) and 413–469 (AGCY…PVCE). Antistasin-like domains lie at 481–510 (CELLVNCTLTEKDCIYSFKLDQNGCRICQC), 517–544 (CTGLISGCSLDCSFGFQTDAHNCEICQC), 551–576 (CKPIVCDKYCPFGYLKNKHGCEICRC), and 579–604 (CPEMPCGKICPMGFQQNSHGCVICKC). Asn486 carries N-linked (GlcNAc...) asparagine glycosylation. 2 VWFC domains span residues 618–675 (GSCL…PSCP) and 689–747 (SICH…PQCP). N-linked (GlcNAc...) asparagine glycosylation occurs at Asn758. VWFC domains follow at residues 763–821 (SYCK…PYCI) and 829–886 (VVCH…PMCP). Residues 904–906 (RGD) carry the Cell attachment site motif. N-linked (GlcNAc...) asparagine glycosylation is present at Asn913. The chain crosses the membrane as a helical span at residues 953–973 (VALVTVPITIALLVIIVFLLI). The Cytoplasmic segment spans residues 974–1048 (NQKKQWIPVS…LQADNFYQTV (75 aa)).

It localises to the membrane. May play a role in CNS development by interacting with growth factors implicated in motor neuron differentiation and survival. This is Cysteine-rich motor neuron 1 protein (CRIM1) from Gallus gallus (Chicken).